Consider the following 506-residue polypeptide: ATP synthase subunit alpha (506 aa).

169–176 (GDRQTGKT) serves as a coordination point for ATP.

The protein belongs to the ATPase alpha/beta chains family. In terms of assembly, F-type ATPases have 2 components, CF(1) - the catalytic core - and CF(0) - the membrane proton channel. CF(1) has five subunits: alpha(3), beta(3), gamma(1), delta(1), epsilon(1). CF(0) has three main subunits: a(1), b(2) and c(9-12). The alpha and beta chains form an alternating ring which encloses part of the gamma chain. CF(1) is attached to CF(0) by a central stalk formed by the gamma and epsilon chains, while a peripheral stalk is formed by the delta and b chains.

Its subcellular location is the cell membrane. The enzyme catalyses ATP + H2O + 4 H(+)(in) = ADP + phosphate + 5 H(+)(out). Its function is as follows. Produces ATP from ADP in the presence of a proton gradient across the membrane. The alpha chain is a regulatory subunit. In Acetivibrio thermocellus (strain ATCC 27405 / DSM 1237 / JCM 9322 / NBRC 103400 / NCIMB 10682 / NRRL B-4536 / VPI 7372) (Clostridium thermocellum), this protein is ATP synthase subunit alpha.